The chain runs to 225 residues: E3 ubiquitin-protein ligase ATL59 (225 aa).

The chain crosses the membrane as a helical span at residues 22-42 (FTFIVCVPICVILIVLLVLYI). The RING-type; atypical zinc finger occupies 97-139 (CSVCLGDYQAEEKLQQMPSCGHTFHMECIDLWLTSHTTCPLCR).

This sequence belongs to the RING-type zinc finger family. ATL subfamily.

The protein resides in the membrane. It carries out the reaction S-ubiquitinyl-[E2 ubiquitin-conjugating enzyme]-L-cysteine + [acceptor protein]-L-lysine = [E2 ubiquitin-conjugating enzyme]-L-cysteine + N(6)-ubiquitinyl-[acceptor protein]-L-lysine.. It functions in the pathway protein modification; protein ubiquitination. Its function is as follows. E3 ubiquitin-protein ligase able to catalyze polyubiquitination with ubiquitin-conjugating enzyme E2 UBC8, UBC10, UBC11, and UBC34 in vitro. The sequence is that of E3 ubiquitin-protein ligase ATL59 (ATL59) from Arabidopsis thaliana (Mouse-ear cress).